Reading from the N-terminus, the 159-residue chain is ATP synthase subunit b', chloroplastic (159 aa).

A helical membrane pass occupies residues L30–Y47.

The protein belongs to the ATPase B chain family. F-type ATPases have 2 components, F(1) - the catalytic core - and F(0) - the membrane proton channel. F(1) has five subunits: alpha(3), beta(3), gamma(1), delta(1), epsilon(1). F(0) has four main subunits: a(1), b(1), b'(1) and c(10-14). The alpha and beta chains form an alternating ring which encloses part of the gamma chain. F(1) is attached to F(0) by a central stalk formed by the gamma and epsilon chains, while a peripheral stalk is formed by the delta, b and b' chains.

It is found in the plastid. The protein localises to the chloroplast thylakoid membrane. Functionally, f(1)F(0) ATP synthase produces ATP from ADP in the presence of a proton or sodium gradient. F-type ATPases consist of two structural domains, F(1) containing the extramembraneous catalytic core and F(0) containing the membrane proton channel, linked together by a central stalk and a peripheral stalk. During catalysis, ATP synthesis in the catalytic domain of F(1) is coupled via a rotary mechanism of the central stalk subunits to proton translocation. In terms of biological role, component of the F(0) channel, it forms part of the peripheral stalk, linking F(1) to F(0). The b'-subunit is a diverged and duplicated form of b found in plants and photosynthetic bacteria. This is ATP synthase subunit b', chloroplastic from Antithamnion sp. (Red alga).